The following is a 344-amino-acid chain: AA9 family lytic polysaccharide monooxygenase cel61A (344 aa).

The N-terminal stretch at 1 to 21 (MIQKLSNLLVTALAVATGVVG) is a signal peptide. His22 is a binding site for Cu(2+). 2 disulfide bridges follow: Cys77/Cys198 and Cys118/Cys122. Asn80 carries an N-linked (GlcNAc...) asparagine glycan. Residue His107 coordinates Cu(2+). Residue Asn158 is glycosylated (N-linked (GlcNAc...) asparagine). 2 residues coordinate O2: His184 and Gln193. Tyr195 provides a ligand contact to Cu(2+). The tract at residues 262-310 (ATASATVPGGGSGPTSRTTTTARTTQASSRPSSTPPATTSAPAGGPTQT) is disordered. Positions 275–310 (PTSRTTTTARTTQASSRPSSTPPATTSAPAGGPTQT) are enriched in low complexity. A CBM1 domain is found at 307–343 (PTQTLYGQCGGSGYSGPTRCAPPATCSTLNPYYAQCL).

This sequence belongs to the polysaccharide monooxygenase AA9 family. Cu(2+) serves as cofactor.

The protein resides in the secreted. It catalyses the reaction [(1-&gt;4)-beta-D-glucosyl]n+m + reduced acceptor + O2 = 4-dehydro-beta-D-glucosyl-[(1-&gt;4)-beta-D-glucosyl]n-1 + [(1-&gt;4)-beta-D-glucosyl]m + acceptor + H2O.. Lytic polysaccharide monooxygenase (LPMO) that depolymerizes crystalline and amorphous polysaccharides via the oxidation of scissile alpha- or beta-(1-4)-glycosidic bonds, yielding C1 or C4 oxidation products. Catalysis by LPMOs requires the reduction of the active-site copper from Cu(II) to Cu(I) by a reducing agent and H(2)O(2) or O(2) as a cosubstrate. Shows activity on beta-glucan and amorphous cellulose. Does not show beta-1-3-glucanase, beta-1,6-glucanase, mannanase, xylanase, beta-1,3-galactosidase, amylase, pectinase, nor chitinase activities. This Hypocrea jecorina (Trichoderma reesei) protein is AA9 family lytic polysaccharide monooxygenase cel61A.